We begin with the raw amino-acid sequence, 400 residues long: Acetate kinase (400 aa).

A Mg(2+)-binding site is contributed by Asn9. Lys16 serves as a coordination point for ATP. Arg90 provides a ligand contact to substrate. Residue Asp147 is the Proton donor/acceptor of the active site. ATP is bound by residues 207 to 211, 282 to 284, and 330 to 334; these read HIGNG, DLR, and GIGEN. Glu385 lines the Mg(2+) pocket.

This sequence belongs to the acetokinase family. In terms of assembly, homodimer. It depends on Mg(2+) as a cofactor. The cofactor is Mn(2+).

It is found in the cytoplasm. It carries out the reaction acetate + ATP = acetyl phosphate + ADP. Its pathway is metabolic intermediate biosynthesis; acetyl-CoA biosynthesis; acetyl-CoA from acetate: step 1/2. Its function is as follows. Catalyzes the formation of acetyl phosphate from acetate and ATP. Can also catalyze the reverse reaction. The polypeptide is Acetate kinase (Staphylococcus aureus (strain Mu3 / ATCC 700698)).